A 426-amino-acid chain; its full sequence is Trigger factor (426 aa).

A PPIase FKBP-type domain is found at Gly-160 to Pro-240.

Belongs to the FKBP-type PPIase family. Tig subfamily.

The protein localises to the cytoplasm. It catalyses the reaction [protein]-peptidylproline (omega=180) = [protein]-peptidylproline (omega=0). Involved in protein export. Acts as a chaperone by maintaining the newly synthesized protein in an open conformation. Functions as a peptidyl-prolyl cis-trans isomerase. This is Trigger factor from Chlorobaculum tepidum (strain ATCC 49652 / DSM 12025 / NBRC 103806 / TLS) (Chlorobium tepidum).